A 384-amino-acid chain; its full sequence is PqqA peptide cyclase (384 aa).

Positions 5-220 constitute a Radical SAM core domain; that stretch reads VGLPLWLLAE…TNEYREKLKA (216 aa). 3 residues coordinate [4Fe-4S] cluster: Cys19, Cys23, and Cys26.

This sequence belongs to the radical SAM superfamily. PqqE family. As to quaternary structure, interacts with PqqD. The interaction is necessary for activity of PqqE. The cofactor is [4Fe-4S] cluster.

The catalysed reaction is [PQQ precursor protein] + S-adenosyl-L-methionine = E-Y cross-linked-[PQQ precursor protein] + 5'-deoxyadenosine + L-methionine + H(+). It functions in the pathway cofactor biosynthesis; pyrroloquinoline quinone biosynthesis. Its function is as follows. Catalyzes the cross-linking of a glutamate residue and a tyrosine residue in the PqqA protein as part of the biosynthesis of pyrroloquinoline quinone (PQQ). The sequence is that of PqqA peptide cyclase from Acinetobacter baumannii (strain ACICU).